Consider the following 132-residue polypeptide: Interferon-induced transmembrane protein 5 (132 aa).

Residues 1 to 11 (MDTAYPREDTR) are compositionally biased toward basic and acidic residues. The interval 1–21 (MDTAYPREDTRAPTPSKAGAH) is disordered. At 1 to 36 (MDTAYPREDTRAPTPSKAGAHTALTLGAPHPPPRDH) the chain is on the extracellular side. The chain crosses the membrane as a helical span at residues 37 to 57 (LIWSVFSTLYLNLCCLGFLAL). S-palmitoyl cysteine attachment occurs at residues Cys-50, Cys-51, and Cys-84. Residues 58 to 86 (AYSIKARDQKVVGDLEAARRFGSKAKCYN) lie on the Cytoplasmic side of the membrane. The chain crosses the membrane as a helical span at residues 87 to 107 (ILAAMWTLVPPLLLLGLVVTG). Over 108–132 (ALHLARLAKDSAAFFSTKFDDADYD) the chain is Extracellular.

It belongs to the CD225/Dispanin family. As to quaternary structure, interacts with FKBP11. Post-translationally, palmitoylated. As to expression, detected in osteoblasts and fibroblasts (at protein level). Detected in bone.

It is found in the cell membrane. Its function is as follows. Required for normal bone mineralization. This chain is Interferon-induced transmembrane protein 5 (IFITM5), found in Homo sapiens (Human).